Reading from the N-terminus, the 546-residue chain is Chaperonin GroEL 3 (546 aa).

Residues 30–33 (TLGP), Lys51, 87–91 (DGTTT), Gly415, and Asp496 contribute to the ATP site.

This sequence belongs to the chaperonin (HSP60) family. In terms of assembly, forms a cylinder of 14 subunits composed of two heptameric rings stacked back-to-back. Interacts with the co-chaperonin GroES.

The protein resides in the cytoplasm. The catalysed reaction is ATP + H2O + a folded polypeptide = ADP + phosphate + an unfolded polypeptide.. In terms of biological role, together with its co-chaperonin GroES, plays an essential role in assisting protein folding. The GroEL-GroES system forms a nano-cage that allows encapsulation of the non-native substrate proteins and provides a physical environment optimized to promote and accelerate protein folding. The polypeptide is Chaperonin GroEL 3 (Bradyrhizobium diazoefficiens (strain JCM 10833 / BCRC 13528 / IAM 13628 / NBRC 14792 / USDA 110)).